The following is a 70-amino-acid chain: Conotoxin ArMKLT2-0111 (70 aa).

The signal sequence occupies residues 1 to 22 (MKLTCVLIIAVLFLTACQLTTG). The propeptide occupies 23–40 (EQKDHALRSTDKNSKLTR). Q41 carries the pyrrolidone carboxylic acid modification. Disulfide bonds link C42/C56, C49/C60, and C55/C67.

It belongs to the conotoxin O1 superfamily. As to expression, expressed by the venom duct.

The protein localises to the secreted. The chain is Conotoxin ArMKLT2-0111 from Conus arenatus (Sand-dusted cone).